A 208-amino-acid polypeptide reads, in one-letter code: Uracil phosphoribosyltransferase (208 aa).

Residues Arg78, Arg103, and 130–138 (DPMLATGGS) each bind 5-phospho-alpha-D-ribose 1-diphosphate. Residues Ile193 and 198–200 (GDA) contribute to the uracil site. A 5-phospho-alpha-D-ribose 1-diphosphate-binding site is contributed by Asp199.

The protein belongs to the UPRTase family. Mg(2+) is required as a cofactor.

It carries out the reaction UMP + diphosphate = 5-phospho-alpha-D-ribose 1-diphosphate + uracil. It functions in the pathway pyrimidine metabolism; UMP biosynthesis via salvage pathway; UMP from uracil: step 1/1. Its activity is regulated as follows. Allosterically activated by GTP. Catalyzes the conversion of uracil and 5-phospho-alpha-D-ribose 1-diphosphate (PRPP) to UMP and diphosphate. This Shewanella denitrificans (strain OS217 / ATCC BAA-1090 / DSM 15013) protein is Uracil phosphoribosyltransferase.